The primary structure comprises 340 residues: Ferredoxin--NADP reductase (340 aa).

FAD is bound by residues D33, Q41, Y46, A86, F120, D286, and T327.

This sequence belongs to the ferredoxin--NADP reductase type 2 family. In terms of assembly, homodimer. FAD is required as a cofactor.

It carries out the reaction 2 reduced [2Fe-2S]-[ferredoxin] + NADP(+) + H(+) = 2 oxidized [2Fe-2S]-[ferredoxin] + NADPH. The sequence is that of Ferredoxin--NADP reductase from Rickettsia rickettsii (strain Iowa).